Consider the following 781-residue polypeptide: Beta-mannosyltransferase 4 (781 aa).

Over 1 to 17 the chain is Cytoplasmic; the sequence is MTKSYMPLFRSPRQFKK. Residues 18 to 38 form a helical membrane-spanning segment; it reads IYFILIPLILAVIILHVFFDG. At 39-781 the chain is on the extracellular side; sequence FNKISEYSPT…EKEDDDDIEV (743 aa). Residues 640 to 733 adopt a coiled-coil conformation; sequence KLGDSEAAIK…AKDEDKNEDE (94 aa). Composition is skewed to basic and acidic residues over residues 663 to 728 and 736 to 750; these read KAEK…KDED and KEKN…KSEV. The interval 663 to 781 is disordered; that stretch reads KAEKEKAEKE…EKEDDDDIEV (119 aa). The segment covering 751–781 has biased composition (acidic residues); the sequence is EENGENTNEGGEDDGDGDGEEEKEDDDDIEV.

This sequence belongs to the BMT family.

Its subcellular location is the membrane. Its function is as follows. Beta-mannosyltransferase involved in cell wall biosynthesis. Required for the elongation of beta-mannose chains on the acid-labile fraction of cell wall phosphopeptidomannan. The chain is Beta-mannosyltransferase 4 (BMT4) from Candida albicans (strain SC5314 / ATCC MYA-2876) (Yeast).